The primary structure comprises 285 residues: Pantothenate synthetase (285 aa).

M30–H37 provides a ligand contact to ATP. Catalysis depends on H37, which acts as the Proton donor. Residue Q61 participates in (R)-pantoate binding. Q61 is a beta-alanine binding site. An ATP-binding site is contributed by G148–D151. Q154 serves as a coordination point for (R)-pantoate. Residues V177 and L185–R188 each bind ATP.

The protein belongs to the pantothenate synthetase family. Homodimer.

It is found in the cytoplasm. It carries out the reaction (R)-pantoate + beta-alanine + ATP = (R)-pantothenate + AMP + diphosphate + H(+). Its pathway is cofactor biosynthesis; (R)-pantothenate biosynthesis; (R)-pantothenate from (R)-pantoate and beta-alanine: step 1/1. Its function is as follows. Catalyzes the condensation of pantoate with beta-alanine in an ATP-dependent reaction via a pantoyl-adenylate intermediate. This chain is Pantothenate synthetase, found in Leptospira interrogans serogroup Icterohaemorrhagiae serovar copenhageni (strain Fiocruz L1-130).